We begin with the raw amino-acid sequence, 427 residues long: Enolase (427 aa).

Gln-163 is a (2R)-2-phosphoglycerate binding site. Glu-205 functions as the Proton donor in the catalytic mechanism. Positions 242, 285, and 312 each coordinate Mg(2+). Positions 337, 366, 367, and 388 each coordinate (2R)-2-phosphoglycerate. Lys-337 serves as the catalytic Proton acceptor.

This sequence belongs to the enolase family. Requires Mg(2+) as cofactor.

It is found in the cytoplasm. The protein localises to the secreted. Its subcellular location is the cell surface. It catalyses the reaction (2R)-2-phosphoglycerate = phosphoenolpyruvate + H2O. The protein operates within carbohydrate degradation; glycolysis; pyruvate from D-glyceraldehyde 3-phosphate: step 4/5. Catalyzes the reversible conversion of 2-phosphoglycerate (2-PG) into phosphoenolpyruvate (PEP). It is essential for the degradation of carbohydrates via glycolysis. This Burkholderia lata (strain ATCC 17760 / DSM 23089 / LMG 22485 / NCIMB 9086 / R18194 / 383) protein is Enolase.